The sequence spans 477 residues: Delayed-rectifier potassium channel regulatory subunit KCNS2 (477 aa).

Over 1 to 184 the chain is Cytoplasmic; that stretch reads MTRQSLWDVS…LALDNPGYSV (184 aa). Residues 185–206 form a helical membrane-spanning segment; that stretch reads LSRVFSVLSILVVLGSIITMCL. Residues 207 to 225 are Extracellular-facing; that stretch reads NSLPDFQIPDSQGNPGEDP. The helical transmembrane segment at 226–248 threads the bilayer; sequence RFEIVEHFGIAWFTFELVARFAV. Topologically, residues 249–259 are cytoplasmic; that stretch reads APDFLKFFKNA. A helical transmembrane segment spans residues 260-280; sequence LNLIDLMSIVPFYITLVVNLV. At 281–290 the chain is on the extracellular side; sequence VESSPTLANL. A helical; Voltage-sensor membrane pass occupies residues 291–311; that stretch reads GRVAQVLRLMRIFRILKLARH. Residues 312–326 are Cytoplasmic-facing; sequence STGLRSLGATLKYSY. The helical transmembrane segment at 327–348 threads the bilayer; the sequence is KEVGLLLLYLSVGISIFSVVAY. Over 349–361 the chain is Extracellular; sequence TIEKEENEGLATI. An intramembrane region (helical) is located at residues 362-373; sequence PACWWWATVSMT. Positions 374-379 match the Selectivity filter motif; the sequence is TVGYGD. An intramembrane segment occupies 374–381; the sequence is TVGYGDVV. Residues 382–388 lie on the Extracellular side of the membrane; sequence PGTTAGK. The chain crosses the membrane as a helical span at residues 389 to 417; the sequence is LTASACILAGILVVVLPITLIFNKFSHFY. Topologically, residues 418–477 are cytoplasmic; sequence RRQKQLESAMRSCDFGDGMKEVPSVNLRDYYAHKVKSLMASLTNMSRSSPSELSLDDSLH.

Belongs to the potassium channel family. S (TC 1.A.1.2) subfamily. Kv9.2/KCNS2 sub-subfamily. In terms of assembly, heterotetramer with KCNB1 and KCNB2. Does not form homomultimers. As to expression, detected in brain, but not in the other tissues tested. Expression was highest in the olfactory bulb, cerebral cortex, hippocampus, habenula, basolateral amygdaloid nuclei and cerebellum.

It is found in the cell membrane. Potassium channel regulatory subunit that modulate the delayed rectifier voltage-gated potassium channel activity of KCNB1 and KCNB2 by altering their kinetics, expression levels, and shifting the half-inactivation potential to more polarized values. While it does not form functional channels on its own, it can form functional heterotetrameric channels with KCNB1 and KCNB2. Each regulatory subunit has unique regulatory properties that can lead to extensive inhibition, significant changes in kinetics, and/or substantial shifts in the voltage dependencies of the inactivation process. The chain is Delayed-rectifier potassium channel regulatory subunit KCNS2 from Mus musculus (Mouse).